The chain runs to 38 residues: Cytochrome b6-f complex subunit 5 (38 aa).

The chain crosses the membrane as a helical span at residues 5-25 (LLLGIVLGLIPITLAGLFVAA).

It belongs to the PetG family. The 4 large subunits of the cytochrome b6-f complex are cytochrome b6, subunit IV (17 kDa polypeptide, PetD), cytochrome f and the Rieske protein, while the 4 small subunits are PetG, PetL, PetM and PetN. The complex functions as a dimer.

The protein localises to the cellular thylakoid membrane. Its function is as follows. Component of the cytochrome b6-f complex, which mediates electron transfer between photosystem II (PSII) and photosystem I (PSI), cyclic electron flow around PSI, and state transitions. PetG is required for either the stability or assembly of the cytochrome b6-f complex. This chain is Cytochrome b6-f complex subunit 5, found in Rippkaea orientalis (strain PCC 8801 / RF-1) (Cyanothece sp. (strain PCC 8801)).